The primary structure comprises 83 residues: Large ribosomal subunit protein bL27 (83 aa).

The tract at residues 1–25 is disordered; it reads MAHKKGQGASRNGRDSESKRLGLKV.

The protein belongs to the bacterial ribosomal protein bL27 family.

This Chlamydia muridarum (strain MoPn / Nigg) protein is Large ribosomal subunit protein bL27.